Consider the following 1021-residue polypeptide: Sodium/potassium-transporting ATPase subunit alpha-1 (1021 aa).

Positions M1 to V5 are excised as a propeptide. The segment covering M1–E11 has biased composition (basic and acidic residues). Residues M1–E36 are disordered. Topologically, residues G4–P85 are cytoplasmic. K9 carries the post-translational modification N6-acetyllysine. Y10 is modified (phosphotyrosine). S16 bears the Phosphoserine; by PKC mark. K21 bears the N6-acetyllysine mark. Positions K26–E36 are enriched in basic and acidic residues. S38 and S45 each carry phosphoserine. Residues P80–P82 are phosphoinositide-3 kinase binding. The helical transmembrane segment at E86 to A106 threads the bilayer. The Extracellular segment spans residues I107–Y129. Residues L130–A150 traverse the membrane as a helical segment. The Cytoplasmic segment spans residues K151–I286. Positions S214–N233 are disordered. Phosphoserine is present on S226. Y258 is modified (phosphotyrosine). Residues E287–I306 form a helical membrane-spanning segment. The Extracellular portion of the chain corresponds to L307–A318. Residues V319–A336 traverse the membrane as a helical segment. The Cytoplasmic segment spans residues T337 to L770. The active-site 4-aspartylphosphate intermediate is D374. 2 positions are modified to phosphoserine: S450 and S482. K485 provides a ligand contact to ATP. Y540 carries the phosphotyrosine modification. Positions R594–D715 are mediates interaction with SCN7A. Position 659 is an N6-succinyllysine (K659). Phosphoserine occurs at positions 666 and 673. Mg(2+) is bound by residues D715 and D719. A helical membrane pass occupies residues K771–I790. Over F791–L800 the chain is Extracellular. A helical membrane pass occupies residues G801–A821. Topologically, residues Y822–K841 are cytoplasmic. A helical transmembrane segment spans residues L842 to F864. Residues F865–C916 are Extracellular-facing. The chain crosses the membrane as a helical span at residues H917–K936. The Cytoplasmic portion of the chain corresponds to T937–N949. Phosphoserine; by PKA is present on S941. Residues K950–Y968 form a helical membrane-spanning segment. The Extracellular portion of the chain corresponds to C969–P983. The chain crosses the membrane as a helical span at residues T984–K1004. The Cytoplasmic portion of the chain corresponds to L1005 to Y1021.

This sequence belongs to the cation transport ATPase (P-type) (TC 3.A.3) family. Type IIC subfamily. As to quaternary structure, the sodium/potassium-transporting ATPase is composed of a catalytic alpha subunit, an auxiliary non-catalytic beta subunit and an additional regulatory subunit. Interacts with regulatory subunit FXYD1. Interacts with regulatory subunit FXYD3. Interacts with SIK1. Interacts with SLC35G1 and STIM1. Interacts with CLN3; this interaction regulates the sodium/potassium-transporting ATPase complex localization at the plasma membrane. Interacts with SCN7A; activates ATP1A1 P-type sodium:potassium-exchanging transporter activity which indirectly signals to nearby neurons to regulate sodium homeostasis. Post-translationally, phosphorylation on Tyr-10 modulates pumping activity. Phosphorylation of Ser-941 by PKA modulates the response of ATP1A1 to PKC. Dephosphorylation by protein phosphatase 2A (PP2A) following increases in intracellular sodium, leading to increase catalytic activity.

Its subcellular location is the cell membrane. The protein resides in the basolateral cell membrane. It localises to the sarcolemma. It is found in the cell projection. The protein localises to the axon. Its subcellular location is the melanosome. The catalysed reaction is K(+)(out) + Na(+)(in) + ATP + H2O = K(+)(in) + Na(+)(out) + ADP + phosphate + H(+). This is the catalytic component of the active enzyme, which catalyzes the hydrolysis of ATP coupled with the exchange of sodium and potassium ions across the plasma membrane. This action creates the electrochemical gradient of sodium and potassium ions, providing the energy for active transport of various nutrients. Could also be part of an osmosensory signaling pathway that senses body-fluid sodium levels and controls salt intake behavior as well as voluntary water intake to regulate sodium homeostasis. This is Sodium/potassium-transporting ATPase subunit alpha-1 (ATP1A1) from Canis lupus familiaris (Dog).